Consider the following 481-residue polypeptide: Aspartyl/glutamyl-tRNA(Asn/Gln) amidotransferase subunit B (481 aa).

This sequence belongs to the GatB/GatE family. GatB subfamily. In terms of assembly, heterotrimer of A, B and C subunits.

It carries out the reaction L-glutamyl-tRNA(Gln) + L-glutamine + ATP + H2O = L-glutaminyl-tRNA(Gln) + L-glutamate + ADP + phosphate + H(+). It catalyses the reaction L-aspartyl-tRNA(Asn) + L-glutamine + ATP + H2O = L-asparaginyl-tRNA(Asn) + L-glutamate + ADP + phosphate + 2 H(+). In terms of biological role, allows the formation of correctly charged Asn-tRNA(Asn) or Gln-tRNA(Gln) through the transamidation of misacylated Asp-tRNA(Asn) or Glu-tRNA(Gln) in organisms which lack either or both of asparaginyl-tRNA or glutaminyl-tRNA synthetases. The reaction takes place in the presence of glutamine and ATP through an activated phospho-Asp-tRNA(Asn) or phospho-Glu-tRNA(Gln). The chain is Aspartyl/glutamyl-tRNA(Asn/Gln) amidotransferase subunit B from Pseudomonas fluorescens (strain Pf0-1).